Here is a 218-residue protein sequence, read N- to C-terminus: DNA ADP-ribosyl transferase (218 aa).

A DarT domain is found at 14-217 (ALIWRIVHRD…SVHTRSGWYF (204 aa)). Residues 18–20 (RIV) and arginine 57 contribute to the NAD(+) site. An NAD(+)-binding element region spans residues 41–59 (QAENWINIGNPELIGKRAG). The active-site Proton acceptor is arginine 57. Residues 123 to 170 (TDSHAYYNWTNYYTSLNSLDQIDWPILQARDFRRDPDDPAKFERYQAE) are ADP-ribosylating turn-turn loop. Residue glutamate 170 is part of the active site.

The protein belongs to the DarT ADP-ribosyltransferase family. Interacts with cognate antitoxin DarG (via C-terminus); this heterodimeric complex neutralizes the toxic effect of DarT by preventing ssDNA binding to DarT and consequently inactivating the toxin by direct protein-protein interactions.

It catalyses the reaction a thymidine in DNA + NAD(+) = an N-(ADP-alpha-D-ribosyl)-thymidine in DNA + nicotinamide + H(+). In terms of biological role, toxic component of the hybrid type II/IV toxin-antitoxin (TA) system DarTG, which plays a crucial role in controlling bacterial growth and bacteriophage infection. ADP-ribosylates ssDNA in the sequence TTT/TCT. In case of phage infection, DarT toxin ADP-ribosylates DNA, which inhibits both viral DNA and RNA synthesis and leads to abortive infection. Its toxic effect is neutralized by cognate antitoxin DarG. May target ssDNA loops during DNA replication, probably modifies thymidine. Wild-type protein cannot be expressed at low levels in the absence of its cognate antitoxin, but a mutant protein (G49D) can be expressed, which slows growth, rapidly inhibits DNA replication, and induces RecA expression and the SOS response. The slow growth phenotype can be suppressed by cognate antitoxin DarG. Has no activity on dsDNA in vitro. In vivo ADP-ribosylates genomic DNA (gDNA). Genetic data strongly suggests ADP-ribosylation by DarT probably generates ssDNA gaps that are repaired by the RecFOR-mediated homologous recombination pathway (RuvAB, RecG) and resolved by RuvC. In some cases these gaps probably migrate into dsDNA, where they are resolved by nucleotide excision repair (NER) detected by UvrAB, excised by UvrC, removed by UvrD, and repaired by Pol I and ligase. Other pathways may also be involved in ADP-ribosylation removal from DNA. In Escherichia coli O127:H6 (strain E2348/69 / EPEC), this protein is DNA ADP-ribosyl transferase.